Consider the following 102-residue polypeptide: Cysteine-rich venom protein VAR9 (102 aa).

Positions 1–19 (MILLKLYLTLAAILCQSRG) are cleaved as a signal peptide. Residues 41 to 80 (NKHNDLRRTVDPPAKNMLKMSWDNIIAESAKRAALRCNYK) form the SCP domain.

This sequence belongs to the CRISP family. Contains 8 disulfide bonds. As to expression, expressed by the venom gland.

It localises to the secreted. Functionally, blocks ryanodine receptors, and potassium channels. This chain is Cysteine-rich venom protein VAR9, found in Varanus varius (Lace monitor lizard).